Consider the following 591-residue polypeptide: Nuclear receptor subfamily 4 group A member 2 (591 aa).

Disordered stretches follow at residues 1–22 (MPCV…SQSY) and 110–133 (SEEM…SSTP). Over residues 8 to 22 (YGSSPQGASPASQSY) the composition is skewed to low complexity. The nuclear receptor DNA-binding region spans 253-328 (EGLCAVCGDN…VGMVKEVVRT (76 aa)). 2 NR C4-type zinc fingers span residues 256–276 (CAVC…CEGC) and 292–311 (CLAN…CQYC). The Bipartite nuclear localization signal (NLS1) signature appears at 280-307 (FKRTVQKNAKYVCLANKNCPVDKRRRNR). The interval 330–354 (SLKGRRGRLPSKPKSPQEPSPPSPP) is disordered. A Nuclear localization signal (NLS1) motif is present at residues 331–343 (LKGRRGRLPSKPK). The span at 345–354 (PQEPSPPSPP) shows a compositional bias: pro residues. In terms of domain architecture, NR LBD spans 353–588 (PPVSLISALV…AIIDKLFLDT (236 aa)). The nuclear export sequence (NES1) motif lies at 436–445 (FLELFVLRLA). The nuclear export sequence (NES2) signature appears at 561–570 (QGLQRIFYLK).

It belongs to the nuclear hormone receptor family.

It localises to the cytoplasm. The protein localises to the nucleus. Its function is as follows. Transcriptional regulator which may play a role in the differentiation and maintenance of meso-diencephalic dopaminergic (mdDA) neurons. The protein is Nuclear receptor subfamily 4 group A member 2 (nr4a2) of Xenopus tropicalis (Western clawed frog).